Consider the following 816-residue polypeptide: Leucine--tRNA ligase (816 aa).

The 'HIGH' region signature appears at 40–51; the sequence is SYPSGSQLHAGH. A 'KMSKS' region motif is present at residues 576–580; sequence KMSKS. ATP is bound at residue K579.

Belongs to the class-I aminoacyl-tRNA synthetase family.

It localises to the cytoplasm. The catalysed reaction is tRNA(Leu) + L-leucine + ATP = L-leucyl-tRNA(Leu) + AMP + diphosphate. This is Leucine--tRNA ligase from Clostridium perfringens (strain SM101 / Type A).